Here is an 862-residue protein sequence, read N- to C-terminus: Alpha,alpha-trehalose-phosphate synthase [UDP-forming] 5 (862 aa).

Serine 5 carries the phosphoserine modification. Position 32 is a phosphothreonine (threonine 32). A glycosyltransferase region spans residues 60–546 (DRIIIVGNQL…ARSFIQDLER (487 aa)).

The protein in the N-terminal section; belongs to the glycosyltransferase 20 family. In the C-terminal section; belongs to the trehalose phosphatase family. In terms of assembly, binds to the phosphopeptide-binding site of GRF/14-3-3 and to MBF1c. In terms of processing, both Ser-5 and Thr-32 must be phosphorylated for binding to GRF/14-3-3. In terms of tissue distribution, low expression in leaves, stems, flower buds, flowers and siliques.

It catalyses the reaction D-glucose 6-phosphate + UDP-alpha-D-glucose = alpha,alpha-trehalose 6-phosphate + UDP + H(+). In Arabidopsis thaliana (Mouse-ear cress), this protein is Alpha,alpha-trehalose-phosphate synthase [UDP-forming] 5 (TPS5).